The sequence spans 139 residues: MLSPRRTKFRKQQRGRMKGLASRGNTINFGDFGLQATEPCWITSRQIEAARRAITRYVRRGGKIWIRIFPDKPITMRPAETRMGSGKGSPEFWVAVVKPGRIMFEIAGVSEEIAREAMRLAAQKLPIKTKFVGREEEYN.

Belongs to the universal ribosomal protein uL16 family. Part of the 50S ribosomal subunit.

Functionally, binds 23S rRNA and is also seen to make contacts with the A and possibly P site tRNAs. This is Large ribosomal subunit protein uL16 from Gloeothece citriformis (strain PCC 7424) (Cyanothece sp. (strain PCC 7424)).